The sequence spans 161 residues: Nucleotide-binding protein Shewmr4_3156 (161 aa).

The protein belongs to the YajQ family.

Its function is as follows. Nucleotide-binding protein. The protein is Nucleotide-binding protein Shewmr4_3156 of Shewanella sp. (strain MR-4).